Reading from the N-terminus, the 525-residue chain is Sucrose transport protein (525 aa).

Residues 1-37 (MAGRNIKNGENNKIAGSSLHLEKNPTTPPEAEATLKK) are Cytoplasmic-facing. The next 12 helical transmembrane spans lie at 38–58 (LGLVASVAAGVQFGWALQLSL), 72–92 (WAAYIWLCGPISGMIVQPLVG), 107–127 (PFIAAGAALVAVAVGLIGFAA), 145–165 (AIAVFVVGFWILDVANNTLQG), 184–204 (YANAFFSFFMALGNIGGYAAG), 230–250 (SCFFISITLLIVLTILALSVV), 295–315 (MLILLLVTALNWIAWFPFLLF), 338–358 (GVHAGALGLMINSVVLGVMSL), 373–393 (LWGIVNIILAVCLAMTVLVTK), 422–442 (LAIFAVLGIPLAITFSIPFAL), 455–475 (GLSLGVLNLAIVVPQMFVSVT), and 488–508 (LPAFVVGAVAATASAVLSFTL). The Cytoplasmic segment spans residues 509-525 (LPSPPPEAKIGGSMGGH).

It belongs to the glycoside-pentoside-hexuronide (GPH) cation symporter transporter (TC 2.A.2.4) family.

The protein resides in the membrane. It participates in glycan biosynthesis; sucrose metabolism. Its function is as follows. Responsible for the transport of sucrose into the cell, with the concomitant uptake of protons (symport system). Can also transport maltose at a lesser rate. This chain is Sucrose transport protein, found in Spinacia oleracea (Spinach).